The primary structure comprises 163 residues: Nucleotide-binding protein Dvul_1191 (163 aa).

Belongs to the YajQ family.

Nucleotide-binding protein. This chain is Nucleotide-binding protein Dvul_1191, found in Nitratidesulfovibrio vulgaris (strain DP4) (Desulfovibrio vulgaris).